Reading from the N-terminus, the 199-residue chain is Peroxiredoxin-1 (199 aa).

An N-acetylserine modification is found at S2. Residues 6 to 165 form the Thioredoxin domain; sequence AKIGYPAPNF…ILRLVQAFQF (160 aa). Position 7 is an N6-acetyllysine; alternate (K7). K7 participates in a covalent cross-link: Glycyl lysine isopeptide (Lys-Gly) (interchain with G-Cter in SUMO2); alternate. Residue K16 is modified to N6-acetyllysine. Position 32 is a phosphoserine (S32). C52 (cysteine sulfenic acid (-SOH) intermediate) is an active-site residue. Residue T90 is modified to Phosphothreonine. K120 is covalently cross-linked (Glycyl lysine isopeptide (Lys-Gly) (interchain with G-Cter in SUMO2)). The residue at position 136 (K136) is an N6-acetyllysine. The segment at 176–199 is disordered; sequence GWKPGSDTIKPDVQKSKEYFSKQK. Residues 184-199 show a composition bias toward basic and acidic residues; sequence IKPDVQKSKEYFSKQK. Residue K185 forms a Glycyl lysine isopeptide (Lys-Gly) (interchain with G-Cter in SUMO1) linkage. K197 is modified (N6-acetyllysine).

The protein belongs to the peroxiredoxin family. AhpC/Prx1 subfamily. In terms of assembly, homodimer; disulfide-linked, upon oxidation. 5 homodimers assemble to form a ring-like decamer. Interacts with GDPD5; forms a mixed-disulfide with GDPD5. Interacts with SESN1 and SESN2. Interacts with FAM107A. Post-translationally, phosphorylated on Thr-90 during the M-phase, which leads to a decrease in enzymatic activity. In terms of processing, acetylation increases reducing activity and resistance to superoxidation. Deacetylated by HDAC6 which decreases reducing activity.

Its subcellular location is the cytoplasm. The catalysed reaction is a hydroperoxide + [thioredoxin]-dithiol = an alcohol + [thioredoxin]-disulfide + H2O. Its function is as follows. Thiol-specific peroxidase that catalyzes the reduction of hydrogen peroxide and organic hydroperoxides to water and alcohols, respectively. Plays a role in cell protection against oxidative stress by detoxifying peroxides and as sensor of hydrogen peroxide-mediated signaling events. Might participate in the signaling cascades of growth factors and tumor necrosis factor-alpha by regulating the intracellular concentrations of H(2)O(2). Reduces an intramolecular disulfide bond in GDPD5 that gates the ability to GDPD5 to drive postmitotic motor neuron differentiation. The polypeptide is Peroxiredoxin-1 (PRDX1) (Cricetulus griseus (Chinese hamster)).